A 457-amino-acid chain; its full sequence is Succinate-semialdehyde dehydrogenase [NADP(+)] 1 (457 aa).

209 to 214 (GSEPAG) contacts NADP(+). Catalysis depends on residues Glu-231 and Cys-265.

The protein belongs to the aldehyde dehydrogenase family.

The enzyme catalyses succinate semialdehyde + NAD(+) + H2O = succinate + NADH + 2 H(+). It catalyses the reaction succinate semialdehyde + NADP(+) + H2O = succinate + NADPH + 2 H(+). Functionally, catalyzes the NADP(+)-dependent oxidation of succinate semialdehyde to succinate. It is believed to be the main source of succinate semialdehyde dehydrogenase activity in Mycobacterium. The protein is Succinate-semialdehyde dehydrogenase [NADP(+)] 1 (gabD1) of Mycobacterium bovis (strain ATCC BAA-935 / AF2122/97).